The following is a 334-amino-acid chain: Tryptophan--tRNA ligase (334 aa).

ATP-binding positions include 11–13 (QPS) and 19–20 (GN). The short motif at 12-20 (PSGELTIGN) is the 'HIGH' region element. An L-tryptophan-binding site is contributed by Asp135. ATP-binding positions include 147–149 (GED), Val186, and 195–199 (KMSKS). The short motif at 195 to 199 (KMSKS) is the 'KMSKS' region element.

Belongs to the class-I aminoacyl-tRNA synthetase family. Homodimer.

Its subcellular location is the cytoplasm. It catalyses the reaction tRNA(Trp) + L-tryptophan + ATP = L-tryptophyl-tRNA(Trp) + AMP + diphosphate + H(+). Functionally, catalyzes the attachment of tryptophan to tRNA(Trp). This chain is Tryptophan--tRNA ligase, found in Salmonella typhi.